A 274-amino-acid polypeptide reads, in one-letter code: Large ribosomal subunit protein uL2 (274 aa).

Residues 195–274 (VGNSDHGLER…SKYIIERRKK (80 aa)) are disordered. Basic residues-rich tracts occupy residues 207–220 (KAGRSRWQGRRPRN) and 244–264 (PRSRKGLYAKGLKTRAPKKQS).

It belongs to the universal ribosomal protein uL2 family. Part of the 50S ribosomal subunit. Forms a bridge to the 30S subunit in the 70S ribosome.

In terms of biological role, one of the primary rRNA binding proteins. Required for association of the 30S and 50S subunits to form the 70S ribosome, for tRNA binding and peptide bond formation. It has been suggested to have peptidyltransferase activity; this is somewhat controversial. Makes several contacts with the 16S rRNA in the 70S ribosome. This Bacteroides thetaiotaomicron (strain ATCC 29148 / DSM 2079 / JCM 5827 / CCUG 10774 / NCTC 10582 / VPI-5482 / E50) protein is Large ribosomal subunit protein uL2.